The chain runs to 256 residues: Rano class II histocompatibility antigen, B alpha chain (256 aa).

An N-terminal signal peptide occupies residues 1–23 (MPLSRALILGVLALTTMLSPCGG). Positions 24 to 111 (QDDIEADHVG…KRSNSTPAVN (88 aa)) are alpha-1. The Extracellular portion of the chain corresponds to 24–218 (QDDIEADHVG…IPAPMSELTE (195 aa)). Positions 108 to 206 (PAVNEVPEAT…LDEPVLRHWE (99 aa)) constitute an Ig-like C1-type domain. The interval 112-205 (EVPEATVFSK…SLDEPVLRHW (94 aa)) is alpha-2. Cys-134 and Cys-190 are joined by a disulfide. The N-linked (GlcNAc...) asparagine glycan is linked to Asn-145. The tract at residues 206-218 (EPEIPAPMSELTE) is connecting peptide. A helical membrane pass occupies residues 219 to 244 (TVVCALGLSVGLVGIVVGTIFIIQGL). Over 245–256 (RSVAPSRHPGPL) the chain is Cytoplasmic.

Belongs to the MHC class II family.

It is found in the membrane. This Rattus norvegicus (Rat) protein is Rano class II histocompatibility antigen, B alpha chain (RT1-Ba).